Consider the following 518-residue polypeptide: Membrane-bound lytic murein transglycosylase F (518 aa).

The N-terminal stretch at 1 to 21 (MKKLKINYLFIGILALLLAVA) is a signal peptide. The non-LT domain stretch occupies residues 22-269 (LWPSIPWFGK…RIEEKYLGHG (248 aa)). Residues 270–518 (DDFDYVDTRT…SRKGSEEKQN (249 aa)) are LT domain. The active site involves Glu314.

This sequence in the N-terminal section; belongs to the bacterial solute-binding protein 3 family. It in the C-terminal section; belongs to the transglycosylase Slt family.

It is found in the cell outer membrane. It carries out the reaction Exolytic cleavage of the (1-&gt;4)-beta-glycosidic linkage between N-acetylmuramic acid (MurNAc) and N-acetylglucosamine (GlcNAc) residues in peptidoglycan, from either the reducing or the non-reducing ends of the peptidoglycan chains, with concomitant formation of a 1,6-anhydrobond in the MurNAc residue.. Functionally, murein-degrading enzyme that degrades murein glycan strands and insoluble, high-molecular weight murein sacculi, with the concomitant formation of a 1,6-anhydromuramoyl product. Lytic transglycosylases (LTs) play an integral role in the metabolism of the peptidoglycan (PG) sacculus. Their lytic action creates space within the PG sacculus to allow for its expansion as well as for the insertion of various structures such as secretion systems and flagella. This is Membrane-bound lytic murein transglycosylase F from Escherichia coli O6:K15:H31 (strain 536 / UPEC).